Here is a 579-residue protein sequence, read N- to C-terminus: XK-related protein 7 (579 aa).

Residues 1–18 (MAAKSDGAAASASPDPEG) are compositionally biased toward low complexity. Positions 1-40 (MAAKSDGAAASASPDPEGAAGGARGSAGGRGEAAAAAGPP) are disordered. Positions 19–31 (AAGGARGSAGGRG) are enriched in gly residues. 2 helical membrane-spanning segments follow: residues 59 to 79 (WVLC…WLAA) and 89 to 109 (YFSL…LLSF). The interval 146–165 (GAFRTKEGSPEPGPQPAPSS) is disordered. The next 5 helical transmembrane spans lie at 260–280 (LLPA…LASY), 314–334 (GLAF…FIVA), 355–375 (WEEI…WFNV), 384–404 (MTLY…FWYS), and 415–435 (LIMV…MCVY). The disordered stretch occupies residues 466 to 510 (ADAITSPPRSLPRTTGAERDGASAGERAGTPTPPVFQVRPGLPPT).

Belongs to the XK family.

The protein localises to the cell membrane. This chain is XK-related protein 7, found in Homo sapiens (Human).